A 397-amino-acid chain; its full sequence is Multidrug resistance protein MdtH (397 aa).

The next 10 membrane-spanning stretches (helical) occupy residues 11–31 (WFLA…MPMI), 71–91 (FGAR…FASL), 94–114 (AQSG…GCLF), 137–157 (LLMM…SWLL), 163–183 (YVCL…LLIL), 211–231 (LVLI…IFPI), 242–262 (AVGW…YPLA), 291–311 (FATT…GIVI), 338–358 (LGLA…HDYA), and 366–386 (LPWL…VNCF).

This sequence belongs to the major facilitator superfamily. DHA1 family. MdtH (TC 2.A.1.2.21) subfamily.

Its subcellular location is the cell inner membrane. The protein is Multidrug resistance protein MdtH of Aeromonas salmonicida (strain A449).